The sequence spans 391 residues: Casein kinase II subunit alpha (391 aa).

Residues 36 to 41 (QDDYQL) form an interaction with beta subunit region. In terms of domain architecture, Protein kinase spans 39–324 (YQLVRKLGRG…AREAMEHPYF (286 aa)). ATP-binding positions include 45 to 53 (LGRGKYSEV) and K68. D156 acts as the Proton acceptor in catalysis. Residues 335-346 (GSSNMPGGSTPV) are compositionally biased toward polar residues. Positions 335–363 (GSSNMPGGSTPVSSASMMSGISSVPTPSP) are disordered. Positions 347–357 (SSASMMSGISS) are enriched in low complexity.

The protein belongs to the protein kinase superfamily. Ser/Thr protein kinase family. CK2 subfamily. As to quaternary structure, tetramer composed of an alpha chain, an alpha' and two beta chains. Interacts with RNPS1.

Its subcellular location is the nucleus. The enzyme catalyses L-seryl-[protein] + ATP = O-phospho-L-seryl-[protein] + ADP + H(+). It carries out the reaction L-threonyl-[protein] + ATP = O-phospho-L-threonyl-[protein] + ADP + H(+). Functionally, catalytic subunit of a constitutively active serine/threonine-protein kinase complex that phosphorylates a large number of substrates containing acidic residues C-terminal to the phosphorylated serine or threonine. Regulates numerous cellular processes, such as cell cycle progression, apoptosis and transcription, as well as viral infection. May act as a regulatory node which integrates and coordinates numerous signals leading to an appropriate cellular response. During mitosis, functions as a component of the p53/TP53-dependent spindle assembly checkpoint (SAC) that maintains cyclin-B-CDK1 activity and G2 arrest in response to spindle damage. Can also negatively regulate apoptosis. Phosphorylates the caspases CASP9 and CASP2 and the apoptotic regulator NOL3. Phosphorylation protects CASP9 from cleavage and activation by CASP8, and inhibits the dimerization of CASP2 and activation of CASP8. Plays an important role in the circadian clock function by phosphorylating BMAL1. The polypeptide is Casein kinase II subunit alpha (CSNK2A1) (Gallus gallus (Chicken)).